We begin with the raw amino-acid sequence, 339 residues long: Transposase for insertion sequence element IS1086 (339 aa).

The 154-residue stretch at 176 to 329 folds into the Integrase catalytic domain; the sequence is DRLMPGHWEG…SPLQVLAQVL (154 aa).

This sequence belongs to the transposase IS30 family.

Functionally, required for the transposition of the insertion element. The chain is Transposase for insertion sequence element IS1086 (IS1086) from Cupriavidus metallidurans (strain ATCC 43123 / DSM 2839 / NBRC 102507 / CH34) (Ralstonia metallidurans).